Here is a 248-residue protein sequence, read N- to C-terminus: Proteasome subunit alpha type-5 (248 aa).

This sequence belongs to the peptidase T1A family. The 26S proteasome consists of a 20S proteasome core and two 19S regulatory subunits. The 20S proteasome core is composed of 28 subunits that are arranged in four stacked rings, resulting in a barrel-shaped structure. The two end rings are each formed by seven alpha subunits, and the two central rings are each formed by seven beta subunits. The catalytic chamber with the active sites is on the inside of the barrel.

The protein resides in the cytoplasm. It is found in the nucleus. Its function is as follows. The proteasome is a multicatalytic proteinase complex which is characterized by its ability to cleave peptides with Arg, Phe, Tyr, Leu, and Glu adjacent to the leaving group at neutral or slightly basic pH. The proteasome has an ATP-dependent proteolytic activity. In Caenorhabditis elegans, this protein is Proteasome subunit alpha type-5 (pas-5).